A 346-amino-acid chain; its full sequence is Inositol 2-dehydrogenase/D-chiro-inositol 3-dehydrogenase (346 aa).

Positions 322–331 (GREESIELPK) are enriched in basic and acidic residues. Residues 322 to 346 (GREESIELPKKPAFYQHSAATPEQV) are disordered.

The protein belongs to the Gfo/Idh/MocA family. In terms of assembly, homotetramer.

It catalyses the reaction myo-inositol + NAD(+) = scyllo-inosose + NADH + H(+). The enzyme catalyses 1D-chiro-inositol + NAD(+) = scyllo-inosine + NADH + H(+). It functions in the pathway polyol metabolism; myo-inositol degradation into acetyl-CoA; acetyl-CoA from myo-inositol: step 1/7. Functionally, involved in the oxidation of myo-inositol (MI) and D-chiro-inositol (DCI) to 2-keto-myo-inositol (2KMI or 2-inosose) and 1-keto-D-chiro-inositol (1KDCI), respectively. The polypeptide is Inositol 2-dehydrogenase/D-chiro-inositol 3-dehydrogenase (Shouchella clausii (strain KSM-K16) (Alkalihalobacillus clausii)).